The sequence spans 471 residues: UDP-N-acetylmuramoylalanine--D-glutamate ligase (471 aa).

120-126 contributes to the ATP binding site; the sequence is GSNGKTT.

This sequence belongs to the MurCDEF family.

The protein resides in the cytoplasm. It carries out the reaction UDP-N-acetyl-alpha-D-muramoyl-L-alanine + D-glutamate + ATP = UDP-N-acetyl-alpha-D-muramoyl-L-alanyl-D-glutamate + ADP + phosphate + H(+). The protein operates within cell wall biogenesis; peptidoglycan biosynthesis. In terms of biological role, cell wall formation. Catalyzes the addition of glutamate to the nucleotide precursor UDP-N-acetylmuramoyl-L-alanine (UMA). This is UDP-N-acetylmuramoylalanine--D-glutamate ligase from Nitrosomonas europaea (strain ATCC 19718 / CIP 103999 / KCTC 2705 / NBRC 14298).